The primary structure comprises 535 residues: Suppressor of cytokine signaling 6 (535 aa).

Residues 80–89 (RLSAKQKSKG) are compositionally biased toward basic residues. The tract at residues 80–105 (RLSAKQKSKGKAGTPSGSSADEDTFS) is disordered. Residues 384 to 491 (WYWGPITRWE…TYPVRLTNPV (108 aa)) form the SH2 domain. Positions 486–535 (RLTNPVSRFMQVRSLQYLCRFVIRQYTRIDLIQKLPLPNKMKDYLQEKHY) constitute an SOCS box domain.

As to quaternary structure, interacts with RBCK1. Interacts with phosphorylated IRS4. Interacts with KIT (phosphorylated). Interacts with PIM3.

Its pathway is protein modification; protein ubiquitination. SOCS family proteins form part of a classical negative feedback system that regulates cytokine signal transduction. May be a substrate recognition component of a SCF-like ECS (Elongin BC-CUL2/5-SOCS-box protein) E3 ubiquitin-protein ligase complex which mediates the ubiquitination and subsequent proteasomal degradation of target proteins. Regulates KIT degradation by ubiquitination of the tyrosine-phosphorylated receptor. The sequence is that of Suppressor of cytokine signaling 6 (SOCS6) from Pongo abelii (Sumatran orangutan).